The sequence spans 558 residues: TNF receptor-associated factor 5 (558 aa).

An RING-type zinc finger spans residues 45-85; sequence CAFCHSVLHNPHQTGCGHRFCQQCIRSLRELNSVPICPVDK. TRAF-type zinc fingers lie at residues 127 to 181 and 182 to 239; these read DHLQ…TNLQ and DHEE…GNLL. Residues 252–302 are a coiled coil; sequence LVLEKNYQLEQRISDLYQSLEQKESKIQQLAETVKKFEKELKQFTQMFGRN. Lysine 318 is covalently cross-linked (Glycyl lysine isopeptide (Lys-Gly) (interchain with G-Cter in ubiquitin)). A coiled-coil region spans residues 340-400; it reads LDLRSLVDAV…EERFKQLEGA (61 aa). An interaction with EIF2AK2/PKR region spans residues 345 to 558; sequence LVDAVDSVKQ…AVDLTDLEDL (214 aa). The 148-residue stretch at 403–550 folds into the MATH domain; that stretch reads SGKLIWKVTD…DDTLFLKVAV (148 aa).

It belongs to the TNF receptor-associated factor family. A subfamily. In terms of assembly, homotrimer. Heterotrimer with TRAF3. Associates with TNFRSF5/CD40 through interaction with TRAF3. Associates with LTBR/TNFRSF3, TNFRSF4, TNFRSF8/CD30, TNFRSF11A/RANK, TNFRSF13B/TACI, TNFRSF14, TNFRSF17, TNFRSF19/TROY, RIPK2, MAP3K14, MAP3K5, and TRAF and TNF receptor associated protein TDP2. Interacts (via C-terminus) with EIF2AK2/PKR (via the kinase catalytic domain). In terms of processing, ubiquitinated at Lys-318 by the SCF(FBXL2) complex, leading to its degradation by the proteasome.

It localises to the cytoplasm. The protein resides in the cytosol. Its function is as follows. Adapter protein and signal transducer that links members of the tumor necrosis factor receptor family to different signaling pathways by association with the receptor cytoplasmic domain and kinases. Mediates activation of NF-kappa-B and probably JNK. Seems to be involved in apoptosis. Plays a role in mediating activation of NF-kappa-B by EIF2AK2/PKR. The sequence is that of TNF receptor-associated factor 5 (Traf5) from Mus musculus (Mouse).